A 541-amino-acid chain; its full sequence is MAGAIIENMSTRKLCIVGGILLVFQVIAFLVGGLIAPSPTTAVPYMSVKCIDVRKNHHKTKWLMPWGPNHCEKLKDFDEAVSRQIEANDIVFAVHIPLPSKEMSPWFQFMLFIMQLDIAFKMDNDLKENAEITLDVSLAYRDDMFNDWEEIAHAIEIRKLKCTFGSPKTLESEGRHYDCDFLPFMEIGSVAHKYYLINIRLPVNERKGINVGIGEVKDIRLVGIHQNGGFTKVWFAMKTFLTPSILIIMVWYWRRITLMTRAPVLLEKVIFALGISMTFINIPVEWFSIGFDWTWMLLFGDIRQGIFYAMLLSFWIIFCGEHMMDQNERNRLSGYWKQVGPIAVGSFCLFIFDMCERGVQLKNPFYSIWTTEVGTELAMAFIIVAGICLCLYFLFLCFMVFQVFRNISGKQSSLPAMSKARRLHYEGLIFRFKFLMLITLACAAMTVIFFIVSQVTEGHWKWGDITIQVNSAFFTGIYGMWNLYVFALMFLYAPSHKNYGEDQSNGDLGVSSGEELQLTTTITHVDGPTEVYKLARKEAQE.

An N-terminal signal peptide occupies residues 1 to 42; the sequence is MAGAIIENMSTRKLCIVGGILLVFQVIAFLVGGLIAPSPTTA. Residues 43 to 232 are Lumenal-facing; sequence VPYMSVKCID…GIHQNGGFTK (190 aa). The helical transmembrane segment at 233-253 threads the bilayer; the sequence is VWFAMKTFLTPSILIIMVWYW. At 254–268 the chain is on the cytoplasmic side; it reads RRITLMTRAPVLLEK. Residues 269–289 form a helical membrane-spanning segment; sequence VIFALGISMTFINIPVEWFSI. Over 290-303 the chain is Lumenal; sequence GFDWTWMLLFGDIR. The chain crosses the membrane as a helical span at residues 304–324; it reads QGIFYAMLLSFWIIFCGEHMM. Residues 325–331 lie on the Cytoplasmic side of the membrane; sequence DQNERNR. Residues 332–352 form a helical membrane-spanning segment; that stretch reads LSGYWKQVGPIAVGSFCLFIF. The Lumenal portion of the chain corresponds to 353-380; sequence DMCERGVQLKNPFYSIWTTEVGTELAMA. The helical transmembrane segment at 381–401 threads the bilayer; sequence FIIVAGICLCLYFLFLCFMVF. At 402 to 431 the chain is on the cytoplasmic side; it reads QVFRNISGKQSSLPAMSKARRLHYEGLIFR. A helical transmembrane segment spans residues 432–452; it reads FKFLMLITLACAAMTVIFFIV. Residues 453–471 lie on the Lumenal side of the membrane; sequence SQVTEGHWKWGDITIQVNS. Residues 472–492 traverse the membrane as a helical segment; sequence AFFTGIYGMWNLYVFALMFLY. Residues 493 to 541 lie on the Cytoplasmic side of the membrane; it reads APSHKNYGEDQSNGDLGVSSGEELQLTTTITHVDGPTEVYKLARKEAQE.

This sequence belongs to the wntless family.

The protein resides in the golgi apparatus membrane. Its subcellular location is the cytoplasmic vesicle membrane. Its function is as follows. May play an essential role in Wnt signaling pathway. May be required for Wnt-dependent patterning processes. The protein is Protein wntless homolog (WLS) of Gallus gallus (Chicken).